A 100-amino-acid polypeptide reads, in one-letter code: Elicitin Vex2 (100 aa).

Intrachain disulfides connect cysteine 3-cysteine 71, cysteine 27-cysteine 56, and cysteine 51-cysteine 95.

This sequence belongs to the elicitin family.

It localises to the secreted. Induces local and distal defense responses (incompatible hypersensitive reaction) in plants from the solanaceae and cruciferae families. Elicits leaf necrosis and causes the accumulation of pathogenesis-related proteins. Might interact with the lipidic molecules of the plasma membrane. This chain is Elicitin Vex2, found in Phytopythium vexans (Damping-off fungus).